Reading from the N-terminus, the 497-residue chain is Alkene monooxygenase system, oxygenase component subunit alpha (497 aa).

6 residues coordinate Fe cation: glutamate 104, glutamate 134, histidine 137, glutamate 197, glutamate 231, and histidine 234.

Belongs to the TmoA/XamoA family. As to quaternary structure, the alkene monooxygenase multicomponent enzyme system is composed of an electron transfer component and a monooxygenase component interacting with the effector protein XamoD. The electron transfer component is composed of a ferredoxin reductase (XamoF) and a ferredoxin (XamoC), and the monooxygenase component is formed by a heterohexamer (dimer of heterotrimers) of two alpha subunits (XamoA), two beta subunits (XamoE) and two gamma subunits (XamoB). Fe(2+) serves as cofactor.

Its subcellular location is the cytoplasm. The enzyme catalyses propene + NADH + O2 + H(+) = 1,2-epoxypropane + NAD(+) + H2O. With respect to regulation, inhibited by propyne. Its function is as follows. Component of the alkene monooxygenase multicomponent enzyme system which catalyzes the O2- and NADH-dependent epoxidation of short chain (C2 to C6) alkenes to their corresponding epoxides. Also able to catalyze the oxidation of a number of chlorinated alkenes, including trichloroethylene, cis- and trans-1,2-dichloroethylene, vinyl chloride, 1-chloropropylene, 1,3-dichloropropylene and 2,3-dichloropropylene. This is Alkene monooxygenase system, oxygenase component subunit alpha from Xanthobacter autotrophicus (strain ATCC BAA-1158 / Py2).